Here is a 472-residue protein sequence, read N- to C-terminus: Putative ankyrin repeat protein L675 (472 aa).

8 ANK repeats span residues 125-156 (YKAN…DIHL), 187-216 (DNFK…NETI), 265-295 (YKTK…DKDI), 297-323 (HAML…NIHY), 325-351 (NDQA…GMDS), 352-381 (NNVF…DVNA), 382-411 (NNRS…DIKI), and 413-440 (DTVI…SCDD).

The polypeptide is Putative ankyrin repeat protein L675 (Acanthamoeba polyphaga (Amoeba)).